We begin with the raw amino-acid sequence, 217 residues long: MTHRVDQEYDYLFKIVLIGDSGVGKSNILSRFTRNEFCLESKSTIGVEFATRTTQVEGKTIKAQIWDTAGQERYRAITSAYYRGAVGALLVYDITKRQTFDNVLRWLRELRDHADSNIVIMMAGNKSDLNHLRSVAEEDGQSLAEKEGLSFLETSALEATNVEKAFQTILGEIYHIISKKALAAQEAAAANSAIPGQGTTINVDDTSGGAKRACCSS.

Residues 19 to 27, 38 to 44, 67 to 71, 125 to 128, and 155 to 157 each bind GTP; these read GDSGVGKSN, CLESKST, DTAGQ, NKSD, and SAL. Positions 41 to 49 match the Effector region motif; it reads SKSTIGVEF. The tract at residues 195 to 217 is disordered; the sequence is PGQGTTINVDDTSGGAKRACCSS. S-geranylgeranyl cysteine attachment occurs at residues Cys-214 and Cys-215.

The protein belongs to the small GTPase superfamily. Rab family. Expressed in root tips.

The protein localises to the endosome membrane. It localises to the golgi apparatus. The protein resides in the trans-Golgi network membrane. Functionally, intracellular vesicle trafficking and protein transport. This chain is Ras-related protein RABA2c (RABA2C), found in Arabidopsis thaliana (Mouse-ear cress).